Consider the following 382-residue polypeptide: Na(+)/H(+) antiporter NhaA 2 (382 aa).

11 consecutive transmembrane segments (helical) span residues 7 to 27 (MVLSETFPGILLIFFTFLALL), 58 to 78 (LDLWINDGLIAIFFLCIGLEL), 94 to 114 (SLPIFGALGGMITPALIFAAI), 124 to 144 (GWAIPTATDIAFAVGILMLLG), 153 to 173 (LFLLSLAIFDDLGAIVIIALF), 178 to 198 (LSALAIIICLFCIFALLLLNY), 199 to 219 (YHITHLSLYVLVGVVLWIAML), 255 to 275 (NPWVVYFILPLFAFANAGIDI), 291 to 311 (IILGLFLGKQLGVFTFCFIAI), 327 to 347 (FYGICILTGIGFTMSLFIDGL), and 361 to 381 (LAILIASFLSAIVGFIYLKIV).

This sequence belongs to the NhaA Na(+)/H(+) (TC 2.A.33) antiporter family.

The protein localises to the cell inner membrane. It carries out the reaction Na(+)(in) + 2 H(+)(out) = Na(+)(out) + 2 H(+)(in). Na(+)/H(+) antiporter that extrudes sodium in exchange for external protons. In Campylobacter jejuni subsp. jejuni serotype O:6 (strain 81116 / NCTC 11828), this protein is Na(+)/H(+) antiporter NhaA 2.